We begin with the raw amino-acid sequence, 404 residues long: RNA exonuclease 3 (404 aa).

Polar residues predominate over residues 1–17 (MNNNAQNKRSLDDSNGN). Residues 1–29 (MNNNAQNKRSLDDSNGNDTKRPKQEDPKY) form a disordered region. The segment covering 18–28 (DTKRPKQEDPK) has biased composition (basic and acidic residues). The region spanning 241–389 (VLGIDCEMGF…EDSIAAIDIV (149 aa)) is the Exonuclease domain.

The protein belongs to the REXO1/REXO3 family.

The protein localises to the cytoplasm. Its subcellular location is the nucleus. 3' to 5' exoribonuclease required for proper 3' end maturation of MRP RNA and of the U5L snRNA. This is RNA exonuclease 3 (REX3) from Candida albicans (strain SC5314 / ATCC MYA-2876) (Yeast).